A 311-amino-acid chain; its full sequence is GTPase Era (311 aa).

An Era-type G domain is found at Arg18–Asn185. Residues Gly26–Ser33 are G1. Gly26–Ser33 lines the GTP pocket. Positions Gln52–Ala56 are G2. The interval Asp73–Gly76 is G3. GTP is bound by residues Asp73 to Ile77 and Asn135 to Asp138. A G4 region spans residues Asn135–Asp138. The tract at residues Ile164–Ala166 is G5. Residues Leu216–Glu293 form the KH type-2 domain.

It belongs to the TRAFAC class TrmE-Era-EngA-EngB-Septin-like GTPase superfamily. Era GTPase family. In terms of assembly, monomer.

The protein localises to the cytoplasm. The protein resides in the cell inner membrane. Its function is as follows. An essential GTPase that binds both GDP and GTP, with rapid nucleotide exchange. Plays a role in 16S rRNA processing and 30S ribosomal subunit biogenesis and possibly also in cell cycle regulation and energy metabolism. In Brucella melitensis biotype 1 (strain ATCC 23456 / CCUG 17765 / NCTC 10094 / 16M), this protein is GTPase Era.